A 506-amino-acid chain; its full sequence is Probable Xaa-Pro aminopeptidase PADG_06815 (506 aa).

Mn(2+) is bound by residues Asp285, Asp296, Glu433, and Glu471.

This sequence belongs to the peptidase M24B family. The cofactor is Mn(2+).

It carries out the reaction Release of any N-terminal amino acid, including proline, that is linked to proline, even from a dipeptide or tripeptide.. Its function is as follows. Catalyzes the removal of a penultimate prolyl residue from the N-termini of peptides. The protein is Probable Xaa-Pro aminopeptidase PADG_06815 of Paracoccidioides brasiliensis (strain Pb18).